Here is a 1030-residue protein sequence, read N- to C-terminus: MMS19 nucleotide excision repair protein homolog (1030 aa).

A2 carries the post-translational modification N-acetylalanine. 4 HEAT repeats span residues 866 to 904, 908 to 946, 949 to 987, and 990 to 1028; these read QRFF…RLPK, LPEL…EAPQ, SLHV…LPTP, and LPYK…LGSP. The residue at position 1027 (S1027) is a Phosphoserine.

The protein belongs to the MET18/MMS19 family. As to quaternary structure, component of the CIA complex. In the CIA complex, interacts directly with CIAO2B and CIAO3. Component of the MMXD complex, composed of CIAO1, ERCC2, CIAO2B, MMS19 and SLC25A5. Interacts with CIAO2B; the interaction is direct. Interacts with ERCC2/XPD; the interaction is direct. Interacts with ERCC3/XPB and NCOA3/RAC3. Interacts with RTEL1; the interaction mediates the association of RTEL1 with the CIA complex. Interacts with BRIP1. Interacts with KIF4A; the interaction facilitates the transfer of Fe-S clusters to KIF4A to ensure proper localization of KIF4A to the mitotic machinery components. Interacts with CCDC117; the interaction is indirect. Ubiquitinated; undergoes 'Lys-48'-linked polyubiquitination.

It is found in the nucleus. The protein localises to the cytoplasm. It localises to the cytoskeleton. Its subcellular location is the spindle. Key component of the cytosolic iron-sulfur protein assembly (CIA) complex, a multiprotein complex that mediates the incorporation of iron-sulfur cluster into apoproteins specifically involved in DNA metabolism and genomic integrity. In the CIA complex, MMS19 acts as an adapter between early-acting CIA components and a subset of cellular target Fe/S proteins such as ERCC2/XPD, FANCJ and RTEL1, thereby playing a key role in nucleotide excision repair (NER), homologous recombination-mediated double-strand break DNA repair, DNA replication and RNA polymerase II (POL II) transcription. As a CIA complex component and in collaboration with CIAO1 and CIAO2, binds to and facilitates the assembly of most cytosolic-nuclear Fe/S proteins. As part of the mitotic spindle-associated MMXD complex, plays a role in chromosome segregation, probably by facilitating iron-sulfur cluster assembly into ERCC2/XPD. Together with CIAO2, facilitates the transfer of Fe-S clusters to the motor protein KIF4A, which ensures proper localization of KIF4A to mitotic machinery components to promote the progression of mitosis. Indirectly acts as a transcriptional coactivator of estrogen receptor (ER), via its role in iron-sulfur insertion into some component of the TFIIH-machinery. The polypeptide is MMS19 nucleotide excision repair protein homolog (Bos taurus (Bovine)).